We begin with the raw amino-acid sequence, 430 residues long: ATP-dependent RNA helicase RhlB (430 aa).

The Q motif motif lies at 9 to 37 (QKFSDFALHPQVIEALESKGFHNCTPIQA). One can recognise a Helicase ATP-binding domain in the interval 40–219 (LPLALSGRDV…FEQMNNAEYV (180 aa)). 53-60 (AQTGTGKT) is an ATP binding site. The DEAD box signature appears at 165–168 (DEAD). The 146-residue stretch at 245 to 390 (RLLQTLLEEE…VSKYNSDALM (146 aa)) folds into the Helicase C-terminal domain. Residues 392–430 (DLPAPKRLTRPPRSNNGPRRHNNAPRRSGAPRNNRKRAD) are disordered.

Belongs to the DEAD box helicase family. RhlB subfamily. Component of the RNA degradosome, which is a multiprotein complex involved in RNA processing and mRNA degradation.

It is found in the cytoplasm. It carries out the reaction ATP + H2O = ADP + phosphate + H(+). Functionally, DEAD-box RNA helicase involved in RNA degradation. Has RNA-dependent ATPase activity and unwinds double-stranded RNA. The sequence is that of ATP-dependent RNA helicase RhlB from Pectobacterium carotovorum subsp. carotovorum (strain PC1).